A 435-amino-acid polypeptide reads, in one-letter code: 3-phosphoshikimate 1-carboxyvinyltransferase (435 aa).

3 residues coordinate 3-phosphoshikimate: Lys-25, Ser-26, and Arg-30. Lys-25 is a binding site for phosphoenolpyruvate. The phosphoenolpyruvate site is built by Gly-99 and Arg-130. 3-phosphoshikimate contacts are provided by Ser-176, Ser-177, Gln-178, Ser-204, Asp-319, Asn-342, and Lys-346. A phosphoenolpyruvate-binding site is contributed by Gln-178. Asp-319 functions as the Proton acceptor in the catalytic mechanism. Residues Arg-350, Arg-394, and Lys-419 each contribute to the phosphoenolpyruvate site.

The protein belongs to the EPSP synthase family. As to quaternary structure, monomer.

The protein localises to the cytoplasm. It carries out the reaction 3-phosphoshikimate + phosphoenolpyruvate = 5-O-(1-carboxyvinyl)-3-phosphoshikimate + phosphate. It participates in metabolic intermediate biosynthesis; chorismate biosynthesis; chorismate from D-erythrose 4-phosphate and phosphoenolpyruvate: step 6/7. In terms of biological role, catalyzes the transfer of the enolpyruvyl moiety of phosphoenolpyruvate (PEP) to the 5-hydroxyl of shikimate-3-phosphate (S3P) to produce enolpyruvyl shikimate-3-phosphate and inorganic phosphate. In Haemophilus ducreyi (strain 35000HP / ATCC 700724), this protein is 3-phosphoshikimate 1-carboxyvinyltransferase.